The primary structure comprises 140 residues: FAD synthase (140 aa).

Residues 10–11, 15–18, and Asn-93 each bind ATP; these read TF and HPGH.

The protein belongs to the archaeal FAD synthase family. Homodimer. It depends on a divalent metal cation as a cofactor.

The enzyme catalyses FMN + ATP + H(+) = FAD + diphosphate. The protein operates within cofactor biosynthesis; FAD biosynthesis; FAD from FMN: step 1/1. In terms of biological role, catalyzes the transfer of the AMP portion of ATP to flavin mononucleotide (FMN) to produce flavin adenine dinucleotide (FAD) coenzyme. In Methanocella arvoryzae (strain DSM 22066 / NBRC 105507 / MRE50), this protein is FAD synthase.